Here is a 97-residue protein sequence, read N- to C-terminus: UPF0235 protein Ppha_2415 (97 aa).

This sequence belongs to the UPF0235 family.

This is UPF0235 protein Ppha_2415 from Pelodictyon phaeoclathratiforme (strain DSM 5477 / BU-1).